The sequence spans 492 residues: Phenylalanine--tRNA ligase alpha subunit (492 aa).

L-phenylalanine is bound by residues Thr335, 374-376 (QLE), and Tyr414. Position 416 (Glu416) interacts with Mg(2+). Phe439 provides a ligand contact to L-phenylalanine.

The protein belongs to the class-II aminoacyl-tRNA synthetase family. Phe-tRNA synthetase alpha subunit type 2 subfamily. In terms of assembly, tetramer of two alpha and two beta subunits. The cofactor is Mg(2+).

The protein resides in the cytoplasm. The catalysed reaction is tRNA(Phe) + L-phenylalanine + ATP = L-phenylalanyl-tRNA(Phe) + AMP + diphosphate + H(+). This Methanosarcina acetivorans (strain ATCC 35395 / DSM 2834 / JCM 12185 / C2A) protein is Phenylalanine--tRNA ligase alpha subunit.